The chain runs to 137 residues: Small ribosomal subunit protein uS12 (137 aa).

Position 102 is a 3-methylthioaspartic acid (D102).

The protein belongs to the universal ribosomal protein uS12 family. In terms of assembly, part of the 30S ribosomal subunit. Contacts proteins S8 and S17. May interact with IF1 in the 30S initiation complex.

With S4 and S5 plays an important role in translational accuracy. Functionally, interacts with and stabilizes bases of the 16S rRNA that are involved in tRNA selection in the A site and with the mRNA backbone. Located at the interface of the 30S and 50S subunits, it traverses the body of the 30S subunit contacting proteins on the other side and probably holding the rRNA structure together. The combined cluster of proteins S8, S12 and S17 appears to hold together the shoulder and platform of the 30S subunit. The sequence is that of Small ribosomal subunit protein uS12 from Phytoplasma mali (strain AT).